The primary structure comprises 140 residues: MCNRLVTVTGVAMVVAAGLSACGQAQTVPRKAARLTIDGVTHTTRPATCSQEHSYRTIDIRNHDSTVQAVVLLSGDRVIPQWVKIRNVDGFNGSFWHGGVGNARADRARNTYTVAGSAYGISSKKPNTVVSTDFNILAEC.

An N-terminal signal peptide occupies residues 1–21 (MCNRLVTVTGVAMVVAAGLSA). Cys22 is lipidated: N-palmitoyl cysteine. Residue Cys22 is the site of S-diacylglycerol cysteine attachment.

This sequence belongs to the mycobacterial 19 kDa antigen family.

It is found in the cell membrane. This Mycobacterium tuberculosis (strain ATCC 25618 / H37Rv) protein is Probable lipoprotein LppE (lppE).